The chain runs to 620 residues: Mitochondrial Rho GTPase 2 (620 aa).

Topologically, residues 1-594 (MKRDVRILLL…ELHTTSFWLR (594 aa)) are cytoplasmic. Residues 2 to 168 (KRDVRILLLG…FYYAQKAVLH (167 aa)) enclose the Miro 1 domain. Residues glycine 16, lysine 17, threonine 18, and serine 19 each coordinate GTP. Threonine 18 contacts Mg(2+). Mg(2+)-binding residues include proline 35 and aspartate 57. Serine 59 serves as a coordination point for GTP. Lysine 96 is covalently cross-linked (Glycyl lysine isopeptide (Lys-Gly) (interchain with G-Cter in ubiquitin)). 5 residues coordinate GTP: asparagine 118, lysine 119, aspartate 121, alanine 149, and lysine 150. Lysine 119 is covalently cross-linked (Glycyl lysine isopeptide (Lys-Gly) (interchain with G-Cter in ubiquitin)). Residue lysine 164 forms a Glycyl lysine isopeptide (Lys-Gly) (interchain with G-Cter in ubiquitin) linkage. 2 EF-hand domains span residues 184 to 219 (ACAQALTRIFRLSDQDMDQALSDQELNAFQTCCFGH) and 304 to 339 (HGYQFAQRMLEKHDQDRDGALSPAELESLFSVFPGP). Aspartate 197, aspartate 199, aspartate 201, glutamate 208, aspartate 317, aspartate 319, aspartate 321, and glutamate 328 together coordinate Ca(2+). Residues 340-364 (PWGPQLPRHRPHRGRSAAPARVPLP) form a disordered region. Residues 415–578 (RNVLLCKVLG…FARLATMATF (164 aa)) enclose the Miro 2 domain. Positions 427, 429, 430, and 431 each coordinate GTP. Mg(2+)-binding residues include serine 431 and glutamate 473. GTP is bound by residues lysine 527, aspartate 529, and cysteine 558. The helical; Anchor for type IV membrane protein transmembrane segment at 595–617 (VALGAVGAAVAAILSFSLYRVLV) threads the bilayer. Topologically, residues 618-620 (KSR) are mitochondrial intermembrane.

The protein belongs to the mitochondrial Rho GTPase family. Homodimer. Interacts with the kinesin-binding proteins TRAK1/OIP106 and TRAK2/GRIF1, forming a link between mitochondria and the trafficking apparatus of the microtubules. Interacts with ARMCX3. Found in a complex with KIF5B, OGT, RHOT1 and TRAK1. In terms of processing, ubiquitinated by PRKN in a PINK1-dependent manner, leading to its degradation.

The protein resides in the mitochondrion outer membrane. The catalysed reaction is GTP + H2O = GDP + phosphate + H(+). It carries out the reaction ATP + H2O = ADP + phosphate + H(+). It catalyses the reaction UTP + H2O = UDP + phosphate + H(+). In terms of biological role, atypical mitochondrial nucleoside-triphosphatase (NTPase) involved in mitochondrial trafficking. Probably involved in control of anterograde transport of mitochondria and their subcellular distribution. Can hydrolyze GTP, ATP and UTP. This Sus scrofa (Pig) protein is Mitochondrial Rho GTPase 2 (RHOT2).